The following is a 182-amino-acid chain: ATP synthase subunit delta (182 aa).

This sequence belongs to the ATPase delta chain family. F-type ATPases have 2 components, F(1) - the catalytic core - and F(0) - the membrane proton channel. F(1) has five subunits: alpha(3), beta(3), gamma(1), delta(1), epsilon(1). F(0) has three main subunits: a(1), b(2) and c(10-14). The alpha and beta chains form an alternating ring which encloses part of the gamma chain. F(1) is attached to F(0) by a central stalk formed by the gamma and epsilon chains, while a peripheral stalk is formed by the delta and b chains.

The protein resides in the cell inner membrane. F(1)F(0) ATP synthase produces ATP from ADP in the presence of a proton or sodium gradient. F-type ATPases consist of two structural domains, F(1) containing the extramembraneous catalytic core and F(0) containing the membrane proton channel, linked together by a central stalk and a peripheral stalk. During catalysis, ATP synthesis in the catalytic domain of F(1) is coupled via a rotary mechanism of the central stalk subunits to proton translocation. Functionally, this protein is part of the stalk that links CF(0) to CF(1). It either transmits conformational changes from CF(0) to CF(1) or is implicated in proton conduction. This Bdellovibrio bacteriovorus (strain ATCC 15356 / DSM 50701 / NCIMB 9529 / HD100) protein is ATP synthase subunit delta.